We begin with the raw amino-acid sequence, 260 residues long: 3'-5' ssDNA/RNA exonuclease TatD (260 aa).

3 residues coordinate a divalent metal cation: glutamate 91, histidine 127, and histidine 152.

Belongs to the metallo-dependent hydrolases superfamily. TatD-type hydrolase family. TatD subfamily. Monomer. The cofactor is Mg(2+).

The protein localises to the cytoplasm. Its function is as follows. 3'-5' exonuclease that prefers single-stranded DNA and RNA. May play a role in the H(2)O(2)-induced DNA damage repair. The protein is 3'-5' ssDNA/RNA exonuclease TatD of Shigella flexneri serotype 5b (strain 8401).